The primary structure comprises 876 residues: Leucine--tRNA ligase (876 aa).

The 'HIGH' region motif lies at 43–53; the sequence is PYPSGRIHMGH. The 'KMSKS' region signature appears at 632–636; it reads KMSKS. Position 635 (lysine 635) interacts with ATP.

The protein belongs to the class-I aminoacyl-tRNA synthetase family.

The protein localises to the cytoplasm. The enzyme catalyses tRNA(Leu) + L-leucine + ATP = L-leucyl-tRNA(Leu) + AMP + diphosphate. This chain is Leucine--tRNA ligase, found in Rhodopseudomonas palustris (strain ATCC BAA-98 / CGA009).